A 147-amino-acid polypeptide reads, in one-letter code: UPF0306 protein YhbP (147 aa).

It belongs to the UPF0306 family.

In Shigella dysenteriae serotype 1 (strain Sd197), this protein is UPF0306 protein YhbP.